We begin with the raw amino-acid sequence, 512 residues long: Sodium/proline symporter (512 aa).

Helical transmembrane passes span Trp16–Gly36, Ile54–Met74, Leu85–Val105, Ile139–Ser159, Phe174–Ala194, Phe200–Asn220, Ile247–Ile267, Ile286–Phe306, Val327–Ser347, Phe381–Trp401, Leu410–Leu430, Ala438–Ile458, and Ile467–Val487.

It belongs to the sodium:solute symporter (SSF) (TC 2.A.21) family.

The protein resides in the cell membrane. The enzyme catalyses L-proline(in) + Na(+)(in) = L-proline(out) + Na(+)(out). Functionally, catalyzes the sodium-dependent uptake of extracellular L-proline. Since most S.aureus strains are L-proline auxotrophs, this transporter may aid the bacterial persistence during an infection of tissues with low proline concentrations. The sequence is that of Sodium/proline symporter (putP) from Staphylococcus aureus (strain USA300).